The sequence spans 351 residues: Phosphoribosylformylglycinamidine cyclo-ligase (351 aa).

This sequence belongs to the AIR synthase family.

It is found in the cytoplasm. The catalysed reaction is 2-formamido-N(1)-(5-O-phospho-beta-D-ribosyl)acetamidine + ATP = 5-amino-1-(5-phospho-beta-D-ribosyl)imidazole + ADP + phosphate + H(+). The protein operates within purine metabolism; IMP biosynthesis via de novo pathway; 5-amino-1-(5-phospho-D-ribosyl)imidazole from N(2)-formyl-N(1)-(5-phospho-D-ribosyl)glycinamide: step 2/2. The polypeptide is Phosphoribosylformylglycinamidine cyclo-ligase (Burkholderia ambifaria (strain MC40-6)).